Consider the following 86-residue polypeptide: Alpha-mammal toxin Ts3 (86 aa).

An N-terminal signal peptide occupies residues 1 to 19; it reads MNYFILLVVVCLLTAGTEG. The LCN-type CS-alpha/beta domain occupies 21–82; sequence KDGYPVEYDN…EPTKTNGKCK (62 aa). 4 disulfides stabilise this stretch: cysteine 31/cysteine 81, cysteine 35/cysteine 57, cysteine 43/cysteine 64, and cysteine 47/cysteine 66. Position 83 is a serine amide (serine 83).

As to expression, expressed by the venom gland.

It localises to the secreted. Its function is as follows. Alpha toxins bind voltage-independently at site-3 of sodium channels (Nav) and inhibit the inactivation of the activated channels, thereby blocking neuronal transmission. This synthetic toxin inhibits inactivation of rat Nav1.4/SCN4A (when tested at 201 nM). In addition, it has been shown to cause a persistent sodium channel activation in nitrergic inhibitory fibers innervating the rabbit corpus cavernosum, resulting in NO release and cavernosal smooth muscle relaxation. This toxin is active against mammals. This synthetic peptide with a Ser at position 31 (C12S) acts as a bradykinin-potentiating peptide (BPP). Induces endothelium-dependent vasodilation that is reverted by NO synthase inhibitor, suggesting it activates molecular targets on vascular endothelium leading to NO production and vasodilation. It appears to induce vasodilation through muscarinic acetylcholine receptors (AChR) M2 (CHRM2) and M3 (CHRM3). Does not inhibit the angiotensin-converting enzyme (ACE). Does not act via bradykinin B2 receptor. This is Alpha-mammal toxin Ts3 from Tityus serrulatus (Brazilian scorpion).